The chain runs to 145 residues: D-aminoacyl-tRNA deacylase (145 aa).

Positions 137 to 138 match the Gly-cisPro motif, important for rejection of L-amino acids motif; the sequence is GP.

This sequence belongs to the DTD family. Homodimer.

It is found in the cytoplasm. The catalysed reaction is glycyl-tRNA(Ala) + H2O = tRNA(Ala) + glycine + H(+). The enzyme catalyses a D-aminoacyl-tRNA + H2O = a tRNA + a D-alpha-amino acid + H(+). In terms of biological role, an aminoacyl-tRNA editing enzyme that deacylates mischarged D-aminoacyl-tRNAs. Also deacylates mischarged glycyl-tRNA(Ala), protecting cells against glycine mischarging by AlaRS. Acts via tRNA-based rather than protein-based catalysis; rejects L-amino acids rather than detecting D-amino acids in the active site. By recycling D-aminoacyl-tRNA to D-amino acids and free tRNA molecules, this enzyme counteracts the toxicity associated with the formation of D-aminoacyl-tRNA entities in vivo and helps enforce protein L-homochirality. The sequence is that of D-aminoacyl-tRNA deacylase from Photobacterium profundum (strain SS9).